Here is a 297-residue protein sequence, read N- to C-terminus: Glucose-6-phosphate 1-epimerase (297 aa).

3 residues coordinate substrate: R57, Q81, and R86. Position 88 is a phosphoserine (S88). H159 is a catalytic residue. Residue D203 participates in substrate binding. E264 is a catalytic residue.

It belongs to the glucose-6-phosphate 1-epimerase family.

It catalyses the reaction alpha-D-glucose 6-phosphate = beta-D-glucose 6-phosphate. Its function is as follows. Catalyzes the interconversion between the alpha and beta anomers from at least three hexose 6-phosphate sugars (Glc6P, Gal6P, and Man6P). The chain is Glucose-6-phosphate 1-epimerase from Saccharomyces cerevisiae (strain ATCC 204508 / S288c) (Baker's yeast).